A 499-amino-acid polypeptide reads, in one-letter code: Cytochrome P450 2M1 (499 aa).

Cys-441 is a heme binding site.

It belongs to the cytochrome P450 family. Heme serves as cofactor. As to expression, in kidney and in liver from juvenile and sexually mature trout from both sexes.

It is found in the endoplasmic reticulum membrane. The protein localises to the microsome membrane. It carries out the reaction an organic molecule + reduced [NADPH--hemoprotein reductase] + O2 = an alcohol + oxidized [NADPH--hemoprotein reductase] + H2O + H(+). In terms of biological role, has (omega-6)-hydroxylation activity toward lauric acid. The protein is Cytochrome P450 2M1 (cyp2m1) of Oncorhynchus mykiss (Rainbow trout).